Here is a 224-residue protein sequence, read N- to C-terminus: Large ribosomal subunit protein uL4 (224 aa).

The disordered stretch occupies residues 52–109; the sequence is AAARQGTHSTKTRGDVSGGGRKPYRQKGTGRARQGSTRAPQFTGGGVVHGPKPRDYSQ.

The protein belongs to the universal ribosomal protein uL4 family. Part of the 50S ribosomal subunit.

Its function is as follows. One of the primary rRNA binding proteins, this protein initially binds near the 5'-end of the 23S rRNA. It is important during the early stages of 50S assembly. It makes multiple contacts with different domains of the 23S rRNA in the assembled 50S subunit and ribosome. Functionally, forms part of the polypeptide exit tunnel. This Mycobacterium marinum (strain ATCC BAA-535 / M) protein is Large ribosomal subunit protein uL4.